The chain runs to 398 residues: Enoyl-[acyl-carrier-protein] reductase [NADH] (398 aa).

NAD(+) contacts are provided by residues 48-53, 74-75, 111-112, and 139-140; these read GASTGY, FE, DG, and LA. Tyr-225 contacts substrate. The active-site Proton donor is Tyr-235. Residues Lys-244 and 273 to 275 each bind NAD(+); that span reads VVT.

It belongs to the TER reductase family. Monomer.

The enzyme catalyses a 2,3-saturated acyl-[ACP] + NAD(+) = a (2E)-enoyl-[ACP] + NADH + H(+). Its pathway is lipid metabolism; fatty acid biosynthesis. Functionally, involved in the final reduction of the elongation cycle of fatty acid synthesis (FAS II). Catalyzes the reduction of a carbon-carbon double bond in an enoyl moiety that is covalently linked to an acyl carrier protein (ACP). This chain is Enoyl-[acyl-carrier-protein] reductase [NADH], found in Variovorax paradoxus (strain S110).